We begin with the raw amino-acid sequence, 194 residues long: Ion-translocating oxidoreductase complex subunit A (194 aa).

A run of 6 helical transmembrane segments spans residues 4 to 24 (LALI…QFLG), 39 to 59 (IGLS…SHIL), 72 to 92 (LRTI…EMLV), 102 to 122 (VLGI…VALL), 135 to 155 (TTQG…FAAL), and 172 to 192 (AIGM…SGLV).

This sequence belongs to the NqrDE/RnfAE family. The complex is composed of six subunits: RnfA, RnfB, RnfC, RnfD, RnfE and RnfG.

The protein resides in the cell inner membrane. In terms of biological role, part of a membrane-bound complex that couples electron transfer with translocation of ions across the membrane. This Pseudomonas aeruginosa (strain LESB58) protein is Ion-translocating oxidoreductase complex subunit A.